The sequence spans 288 residues: Energy-coupling factor transporter ATP-binding protein EcfA2 (288 aa).

The ABC transporter domain occupies 2 to 244; it reads IKFEKVNYTY…VDFLKAHELG (243 aa). Residue 39-46 participates in ATP binding; the sequence is GHTGSGKS.

It belongs to the ABC transporter superfamily. Energy-coupling factor EcfA family. As to quaternary structure, forms a stable energy-coupling factor (ECF) transporter complex composed of 2 membrane-embedded substrate-binding proteins (S component), 2 ATP-binding proteins (A component) and 2 transmembrane proteins (T component).

Its subcellular location is the cell membrane. ATP-binding (A) component of a common energy-coupling factor (ECF) ABC-transporter complex. Unlike classic ABC transporters this ECF transporter provides the energy necessary to transport a number of different substrates. The polypeptide is Energy-coupling factor transporter ATP-binding protein EcfA2 (Lactococcus lactis subsp. lactis (strain IL1403) (Streptococcus lactis)).